The primary structure comprises 356 residues: tRNA-specific 2-thiouridylase MnmA 2 (356 aa).

ATP is bound by residues 8–15 and Met34; that span reads GMSGGVDS. Cys103 (nucleophile) is an active-site residue. Cys103 and Cys199 are joined by a disulfide. Position 127 (Gly127) interacts with ATP. The interval 149 to 151 is interaction with tRNA; it reads KDQ. Cys199 functions as the Cysteine persulfide intermediate in the catalytic mechanism. The interval 305 to 306 is interaction with tRNA; the sequence is RY.

This sequence belongs to the MnmA/TRMU family.

It localises to the cytoplasm. The catalysed reaction is S-sulfanyl-L-cysteinyl-[protein] + uridine(34) in tRNA + AH2 + ATP = 2-thiouridine(34) in tRNA + L-cysteinyl-[protein] + A + AMP + diphosphate + H(+). Catalyzes the 2-thiolation of uridine at the wobble position (U34) of tRNA, leading to the formation of s(2)U34. This is tRNA-specific 2-thiouridylase MnmA 2 from Clostridium botulinum (strain Okra / Type B1).